Reading from the N-terminus, the 234-residue chain is 1-(5-phosphoribosyl)-5-[(5-phosphoribosylamino)methylideneamino] imidazole-4-carboxamide isomerase (234 aa).

The active-site Proton acceptor is the D8. D128 acts as the Proton donor in catalysis.

This sequence belongs to the HisA/HisF family.

It is found in the cytoplasm. It carries out the reaction 1-(5-phospho-beta-D-ribosyl)-5-[(5-phospho-beta-D-ribosylamino)methylideneamino]imidazole-4-carboxamide = 5-[(5-phospho-1-deoxy-D-ribulos-1-ylimino)methylamino]-1-(5-phospho-beta-D-ribosyl)imidazole-4-carboxamide. The protein operates within amino-acid biosynthesis; L-histidine biosynthesis; L-histidine from 5-phospho-alpha-D-ribose 1-diphosphate: step 4/9. In Cenarchaeum symbiosum (strain A), this protein is 1-(5-phosphoribosyl)-5-[(5-phosphoribosylamino)methylideneamino] imidazole-4-carboxamide isomerase.